Here is a 658-residue protein sequence, read N- to C-terminus: Cysteine-rich receptor-like protein kinase 14 (658 aa).

A signal peptide spans methionine 1–alanine 22. Gnk2-homologous domains follow at residues glutamine 23–phenylalanine 125 and alanine 131–phenylalanine 240. Topologically, residues glutamine 23–serine 277 are extracellular. Asparagine 51, asparagine 60, asparagine 102, asparagine 122, and asparagine 146 each carry an N-linked (GlcNAc...) asparagine glycan. The helical transmembrane segment at isoleucine 278 to alanine 298 threads the bilayer. Residues leucine 299 to arginine 658 lie on the Cytoplasmic side of the membrane. The 278-residue stretch at phenylalanine 337–valine 614 folds into the Protein kinase domain. ATP is bound by residues isoleucine 343–valine 351 and lysine 364. Tyrosine 409 is subject to Phosphotyrosine. Aspartate 461 (proton acceptor) is an active-site residue. Serine 465 is subject to Phosphoserine. Phosphothreonine is present on threonine 501. Residue tyrosine 509 is modified to Phosphotyrosine.

Belongs to the protein kinase superfamily. Ser/Thr protein kinase family. CRK subfamily.

Its subcellular location is the membrane. It catalyses the reaction L-seryl-[protein] + ATP = O-phospho-L-seryl-[protein] + ADP + H(+). The catalysed reaction is L-threonyl-[protein] + ATP = O-phospho-L-threonyl-[protein] + ADP + H(+). The protein is Cysteine-rich receptor-like protein kinase 14 (CRK14) of Arabidopsis thaliana (Mouse-ear cress).